We begin with the raw amino-acid sequence, 342 residues long: Phenylalanine--tRNA ligase alpha subunit (342 aa).

Glu257 contacts Mg(2+).

Belongs to the class-II aminoacyl-tRNA synthetase family. Phe-tRNA synthetase alpha subunit type 1 subfamily. In terms of assembly, tetramer of two alpha and two beta subunits. The cofactor is Mg(2+).

The protein localises to the cytoplasm. The enzyme catalyses tRNA(Phe) + L-phenylalanine + ATP = L-phenylalanyl-tRNA(Phe) + AMP + diphosphate + H(+). This Legionella pneumophila subsp. pneumophila (strain Philadelphia 1 / ATCC 33152 / DSM 7513) protein is Phenylalanine--tRNA ligase alpha subunit.